Reading from the N-terminus, the 369-residue chain is Dihydroorotate dehydrogenase (quinone) (369 aa).

FMN contacts are provided by residues 66–70 and Thr90; that span reads AGFDK. Lys70 provides a ligand contact to substrate. Substrate is bound at residue 115 to 119; sequence NRMGF. FMN-binding residues include Asn143 and Asn176. Asn176 is a substrate binding site. The Nucleophile role is filled by Ser179. Asn181 provides a ligand contact to substrate. 2 residues coordinate FMN: Lys217 and Thr245. 246 to 247 contributes to the substrate binding site; sequence NT. Residues Gly271, Gly300, and 321–322 each bind FMN; that span reads YT.

It belongs to the dihydroorotate dehydrogenase family. Type 2 subfamily. In terms of assembly, monomer. Requires FMN as cofactor.

The protein resides in the cell membrane. It carries out the reaction (S)-dihydroorotate + a quinone = orotate + a quinol. It functions in the pathway pyrimidine metabolism; UMP biosynthesis via de novo pathway; orotate from (S)-dihydroorotate (quinone route): step 1/1. Catalyzes the conversion of dihydroorotate to orotate with quinone as electron acceptor. The chain is Dihydroorotate dehydrogenase (quinone) from Nocardia farcinica (strain IFM 10152).